Consider the following 593-residue polypeptide: MEDYKQRIKNKLNVVPMEPGCYLMKDRNDQVIYVGKAKKLRNRLRSYFTGAHDAKTTRLVGEIRRFEFIVTSSETESLLLELNLIKQYQPRYNILLKDDKSYPFIKITKEKYPRLLVTRTVKQGTGKYFGPYPNAYSAQETKKLLDRIYPYRKCDKMPDKLCLYYHIGQCLGPCVYDVDLSKYAQMTKEITDFLNGEDKTILKSLEERMLTASESLDFERAKEYRDLIQHIQNLTNKQKIMSSDKTIRDVFGYCVDKGWMCIQVFFIRQGNMIKRDTTMIPLQQTEEEEFYTFIGQFYSLNQHILPKEVHVPRNLDKEMIQSVVDTKIVQPARGPKKDMVDLAAHNAKVSLNNKFELISRDESRTIKAIEELGTQMGIQTPIRIEAFDNSNIQGVDPVSAMVTFVDGKPDKKNYRKYKIKTVKGPDDYKSMREVVRRRYSRVLNEGLPLPDLIIVDGGKGHMNGVIDVLQNELGLDIPVAGLQKNDKHQTSELLYGASAEIVPLKKNSQAFYLLHRIQDEVHRFAITFHRQTRQKTGLKSILDDIDGIGNKRKTLLLRSFGSIKKMKEATLEDFKNIGIPENVAKNLHEQLHK.

One can recognise a GIY-YIG domain in the interval 17–94 (MEPGCYLMKD…IKQYQPRYNI (78 aa)). The UVR domain maps to 199–234 (KTILKSLEERMLTASESLDFERAKEYRDLIQHIQNL).

It belongs to the UvrC family. In terms of assembly, interacts with UvrB in an incision complex.

The protein localises to the cytoplasm. The UvrABC repair system catalyzes the recognition and processing of DNA lesions. UvrC both incises the 5' and 3' sides of the lesion. The N-terminal half is responsible for the 3' incision and the C-terminal half is responsible for the 5' incision. In Staphylococcus aureus (strain Mu3 / ATCC 700698), this protein is UvrABC system protein C.